The primary structure comprises 636 residues: Threonine--tRNA ligase (636 aa).

Positions Met-1–Thr-61 constitute a TGS domain. A catalytic region spans residues Asp-242–Pro-533. Cys-333, His-384, and His-510 together coordinate Zn(2+).

The protein belongs to the class-II aminoacyl-tRNA synthetase family. As to quaternary structure, homodimer. Zn(2+) serves as cofactor.

It is found in the cytoplasm. It carries out the reaction tRNA(Thr) + L-threonine + ATP = L-threonyl-tRNA(Thr) + AMP + diphosphate + H(+). In terms of biological role, catalyzes the attachment of threonine to tRNA(Thr) in a two-step reaction: L-threonine is first activated by ATP to form Thr-AMP and then transferred to the acceptor end of tRNA(Thr). Also edits incorrectly charged L-seryl-tRNA(Thr). This Saccharophagus degradans (strain 2-40 / ATCC 43961 / DSM 17024) protein is Threonine--tRNA ligase.